The primary structure comprises 148 residues: SsrA-binding protein (148 aa).

The segment at 119–148 (AKGKKQHDKRQSMKEADWKREKQRLIKHTR) is disordered. Residues 127–142 (KRQSMKEADWKREKQR) show a composition bias toward basic and acidic residues.

It belongs to the SmpB family.

The protein resides in the cytoplasm. Required for rescue of stalled ribosomes mediated by trans-translation. Binds to transfer-messenger RNA (tmRNA), required for stable association of tmRNA with ribosomes. tmRNA and SmpB together mimic tRNA shape, replacing the anticodon stem-loop with SmpB. tmRNA is encoded by the ssrA gene; the 2 termini fold to resemble tRNA(Ala) and it encodes a 'tag peptide', a short internal open reading frame. During trans-translation Ala-aminoacylated tmRNA acts like a tRNA, entering the A-site of stalled ribosomes, displacing the stalled mRNA. The ribosome then switches to translate the ORF on the tmRNA; the nascent peptide is terminated with the 'tag peptide' encoded by the tmRNA and targeted for degradation. The ribosome is freed to recommence translation, which seems to be the essential function of trans-translation. In Neisseria gonorrhoeae (strain ATCC 700825 / FA 1090), this protein is SsrA-binding protein.